A 264-amino-acid chain; its full sequence is Major prion protein (264 aa).

The signal sequence occupies residues 1-24 (MVKSHIGSWILVLFVAMWSDVGLC). The segment at 25–241 (KKRPKPGGGW…ESQAYYQRGA (217 aa)) is interaction with GRB2, ERI3 and SYN1. The interval 28–118 (PKPGGGWNTG…QWNKPSKPKT (91 aa)) is disordered. 6 consecutive repeat copies span residues 54–62 (PQGGGSWGQ), 63–70 (PHGGGWGQ), 71–78 (PHGGSWGQ), 79–86 (PHGGGWGQ), 87–94 (PHGGGWGQ), and 95–103 (PHGGGGWGQ). A 6 X 8 AA tandem repeats of P-H-G-G-G-W-G-Q region spans residues 54–103 (PQGGGSWGQPHGGGWGQPHGGSWGQPHGGGWGQPHGGGWGQPHGGGGWGQ). Positions 55–107 (QGGGSWGQPHGGGWGQPHGGSWGQPHGGGWGQPHGGGWGQPHGGGGWGQGGTH) are enriched in gly residues. Residues His72, Gly73, Gly74, His80, Gly81, Gly82, His88, Gly89, Gly90, His96, Gly98, and Gly99 each coordinate Cu(2+). Cys190 and Cys225 are joined by a disulfide. N-linked (GlcNAc...) asparagine glycosylation is found at Asn192 and Asn208. The GPI-anchor amidated alanine moiety is linked to residue Ala241. Positions 242–264 (SVVLFSSPPVVLLISFLIFLIVG) are cleaved as a propeptide — removed in mature form.

This sequence belongs to the prion family. In terms of assembly, monomer and homodimer. Has a tendency to aggregate into amyloid fibrils containing a cross-beta spine, formed by a steric zipper of superposed beta-strands. Soluble oligomers may represent an intermediate stage on the path to fibril formation. Copper binding may promote oligomerization. Interacts with GRB2, APP, ERI3/PRNPIP and SYN1. Mislocalized cytosolically exposed PrP interacts with MGRN1; this interaction alters MGRN1 subcellular location and causes lysosomal enlargement. Interacts with KIAA1191.

The protein localises to the cell membrane. It localises to the golgi apparatus. Its function is as follows. Its primary physiological function is unclear. Has cytoprotective activity against internal or environmental stresses. May play a role in neuronal development and synaptic plasticity. May be required for neuronal myelin sheath maintenance. May play a role in iron uptake and iron homeostasis. Soluble oligomers are toxic to cultured neuroblastoma cells and induce apoptosis (in vitro). Association with GPC1 (via its heparan sulfate chains) targets PRNP to lipid rafts. Also provides Cu(2+) or Zn(2+) for the ascorbate-mediated GPC1 deaminase degradation of its heparan sulfate side chains. This Boselaphus tragocamelus (Nilgai) protein is Major prion protein (PRNP).